The chain runs to 122 residues: Large ribosomal subunit protein uL14 (122 aa).

It belongs to the universal ribosomal protein uL14 family. As to quaternary structure, part of the 50S ribosomal subunit. Forms a cluster with proteins L3 and L19. In the 70S ribosome, L14 and L19 interact and together make contacts with the 16S rRNA in bridges B5 and B8.

Functionally, binds to 23S rRNA. Forms part of two intersubunit bridges in the 70S ribosome. The chain is Large ribosomal subunit protein uL14 from Clostridium kluyveri (strain ATCC 8527 / DSM 555 / NBRC 12016 / NCIMB 10680 / K1).